We begin with the raw amino-acid sequence, 162 residues long: MRHGKKFNHLSRQKGHRAAMLANMACSLIEHKRINTTVAKAKALKQFVEPLITKSKDDTTHNRRICFAYLRSKYAVTDLFRDVAAKVGDRPGGYTRIIKLGNRLGDNADMAMIELVDFNELYNGGKKEEVKTKSRRGGKAKKAEPTTEAPANTTEETTDSAE.

The interval Lys-126–Glu-162 is disordered. Residues Thr-146 to Glu-155 are compositionally biased toward low complexity.

The protein belongs to the bacterial ribosomal protein bL17 family. As to quaternary structure, part of the 50S ribosomal subunit. Contacts protein L32.

This is Large ribosomal subunit protein bL17 from Flavobacterium psychrophilum (strain ATCC 49511 / DSM 21280 / CIP 103535 / JIP02/86).